A 534-amino-acid polypeptide reads, in one-letter code: Phosphoenolpyruvate carboxykinase (ATP) (534 aa).

Substrate is bound by residues Arg59, Tyr200, and Lys206. Residues Lys206, His225, and 242 to 250 contribute to the ATP site; that span reads GLSGTGKTT. 2 residues coordinate Mn(2+): Lys206 and His225. Asp263 contacts Mn(2+). ATP is bound by residues Glu291, Arg327, 443-444, and Thr449; that span reads RI. Arg327 contributes to the substrate binding site.

This sequence belongs to the phosphoenolpyruvate carboxykinase (ATP) family. Mn(2+) serves as cofactor.

The protein localises to the cytoplasm. The enzyme catalyses oxaloacetate + ATP = phosphoenolpyruvate + ADP + CO2. It functions in the pathway carbohydrate biosynthesis; gluconeogenesis. Functionally, involved in the gluconeogenesis. Catalyzes the conversion of oxaloacetate (OAA) to phosphoenolpyruvate (PEP) through direct phosphoryl transfer between the nucleoside triphosphate and OAA. The chain is Phosphoenolpyruvate carboxykinase (ATP) from Lachnospira eligens (strain ATCC 27750 / DSM 3376 / VPI C15-48 / C15-B4) (Eubacterium eligens).